A 212-amino-acid chain; its full sequence is Synaptosomal-associated protein 25 (212 aa).

2 consecutive t-SNARE coiled-coil homology domains span residues 26-88 (QGVA…LSGM) and 148-210 (DARE…AHQL).

The protein belongs to the SNAP-25 family. As to expression, exclusively found in brain and ganglia.

The protein resides in the synapse. Its subcellular location is the synaptosome. Functionally, may play an important role in the synaptic function of specific neuronal systems. Associates with proteins involved in vesicle docking and membrane fusion. The sequence is that of Synaptosomal-associated protein 25 (Snap25) from Drosophila melanogaster (Fruit fly).